Here is a 237-residue protein sequence, read N- to C-terminus: NAD(P)H-quinone oxidoreductase subunit K, chloroplastic (237 aa).

[4Fe-4S] cluster-binding residues include C55, C56, C120, and C151.

This sequence belongs to the complex I 20 kDa subunit family. NDH is composed of at least 16 different subunits, 5 of which are encoded in the nucleus. [4Fe-4S] cluster serves as cofactor.

It localises to the plastid. The protein resides in the chloroplast thylakoid membrane. It carries out the reaction a plastoquinone + NADH + (n+1) H(+)(in) = a plastoquinol + NAD(+) + n H(+)(out). It catalyses the reaction a plastoquinone + NADPH + (n+1) H(+)(in) = a plastoquinol + NADP(+) + n H(+)(out). Functionally, NDH shuttles electrons from NAD(P)H:plastoquinone, via FMN and iron-sulfur (Fe-S) centers, to quinones in the photosynthetic chain and possibly in a chloroplast respiratory chain. The immediate electron acceptor for the enzyme in this species is believed to be plastoquinone. Couples the redox reaction to proton translocation, and thus conserves the redox energy in a proton gradient. In Nephroselmis olivacea (Green alga), this protein is NAD(P)H-quinone oxidoreductase subunit K, chloroplastic.